A 700-amino-acid chain; its full sequence is Acetoacetyl-CoA synthetase (700 aa).

Residues 1-35 form a disordered region; the sequence is MTAVSANGKTTEKHENGAHTNGTTNGTTNGSMNGN. A compositionally biased stretch (low complexity) spans 18-35; it reads AHTNGTTNGTTNGSMNGN.

This sequence belongs to the ATP-dependent AMP-binding enzyme family. As to expression, present in most cells of the organism.

The protein localises to the cytoplasm. It localises to the nucleus. It catalyses the reaction acetoacetate + ATP + CoA = acetoacetyl-CoA + AMP + diphosphate. Activates acetoacetate to acetoacetyl-CoA. Negatively regulates let-60 Ras activity during vulval induction. The chain is Acetoacetyl-CoA synthetase (sur-5) from Caenorhabditis elegans.